A 410-amino-acid polypeptide reads, in one-letter code: Arginine deiminase (410 aa).

The Amidino-cysteine intermediate role is filled by cysteine 400.

This sequence belongs to the arginine deiminase family.

Its subcellular location is the cytoplasm. The enzyme catalyses L-arginine + H2O = L-citrulline + NH4(+). The protein operates within amino-acid degradation; L-arginine degradation via ADI pathway; carbamoyl phosphate from L-arginine: step 1/2. The protein is Arginine deiminase of Streptococcus uberis (strain ATCC BAA-854 / 0140J).